Reading from the N-terminus, the 438-residue chain is UDP-N-acetylmuramoylalanine--D-glutamate ligase (438 aa).

112–118 provides a ligand contact to ATP; that stretch reads GSNGKST.

Belongs to the MurCDEF family.

The protein localises to the cytoplasm. It catalyses the reaction UDP-N-acetyl-alpha-D-muramoyl-L-alanine + D-glutamate + ATP = UDP-N-acetyl-alpha-D-muramoyl-L-alanyl-D-glutamate + ADP + phosphate + H(+). It participates in cell wall biogenesis; peptidoglycan biosynthesis. Cell wall formation. Catalyzes the addition of glutamate to the nucleotide precursor UDP-N-acetylmuramoyl-L-alanine (UMA). The polypeptide is UDP-N-acetylmuramoylalanine--D-glutamate ligase (murD) (Escherichia coli O6:H1 (strain CFT073 / ATCC 700928 / UPEC)).